The primary structure comprises 158 residues: S-ribosylhomocysteine lyase (158 aa).

The Fe cation site is built by His54, His58, and Cys124.

It belongs to the LuxS family. Homodimer. It depends on Fe cation as a cofactor.

The catalysed reaction is S-(5-deoxy-D-ribos-5-yl)-L-homocysteine = (S)-4,5-dihydroxypentane-2,3-dione + L-homocysteine. Functionally, involved in the synthesis of autoinducer 2 (AI-2) which is secreted by bacteria and is used to communicate both the cell density and the metabolic potential of the environment. The regulation of gene expression in response to changes in cell density is called quorum sensing. Catalyzes the transformation of S-ribosylhomocysteine (RHC) to homocysteine (HC) and 4,5-dihydroxy-2,3-pentadione (DPD). The protein is S-ribosylhomocysteine lyase of Lactiplantibacillus plantarum (strain ATCC BAA-793 / NCIMB 8826 / WCFS1) (Lactobacillus plantarum).